The chain runs to 284 residues: tRNA uridine(34) hydroxylase (284 aa).

The Rhodanese domain occupies Ala-132 to Tyr-226. Catalysis depends on Cys-186, which acts as the Cysteine persulfide intermediate.

It belongs to the TrhO family.

It carries out the reaction uridine(34) in tRNA + AH2 + O2 = 5-hydroxyuridine(34) in tRNA + A + H2O. In terms of biological role, catalyzes oxygen-dependent 5-hydroxyuridine (ho5U) modification at position 34 in tRNAs. The protein is tRNA uridine(34) hydroxylase of Burkholderia orbicola (strain MC0-3).